We begin with the raw amino-acid sequence, 549 residues long: GPI mannosyltransferase 3 (549 aa).

Topologically, residues 1 to 39 (MAYNNSVRKRKKDIQDANGFHRDQTIDKKSRATNKLEES) are cytoplasmic. A helical transmembrane segment spans residues 40–60 (LPTFKVFIVLFFIRLLNSLTI). At 61 to 119 (KTFFQADEYYQCLEPAYNFVFGSGYITWEWEEGIRSSIHPLIYALGYKMVSYVHFDDKP) the chain is on the lumenal side. The chain crosses the membrane as a helical span at residues 120–140 (IILIPKVIGALIASIGEVYLY). Topologically, residues 141–154 (KFSKKFTKNEKLAR) are cytoplasmic. A helical membrane pass occupies residues 155-175 (LTLILSLLSPFNWYIITRSFS). Over 176 to 205 (NSFEMVLTTIAFTYWPWDNVISYKDISMSC) the chain is Lumenal. The chain crosses the membrane as a helical span at residues 206 to 226 (IIAFISCIVRPTNGIIWLYLG). Over 227–246 (INFMIKNYKLEKQSGKLMKL) the chain is Cytoplasmic. A helical transmembrane segment spans residues 247 to 267 (ILILSIELILILLVNTGLDYI). At 268–289 (FYGKTTFPLYNFVEFNVIRNLS) the chain is on the lumenal side. The N-linked (GlcNAc...) asparagine glycan is linked to Asn287. Residues 290–310 (IFYGVAPWHFYLFQGVPIILM) traverse the membrane as a helical segment. Residues 311-328 (TYLPWLLHSAIVLKKYKS) are Cytoplasmic-facing. The chain crosses the membrane as a helical span at residues 329-349 (LLGQVAILMIGGFSLIDHKEI). Residue Arg350 is a topological domain, lumenal. A helical transmembrane segment spans residues 351–367 (FIYPLQPIFMLMVAYSI). Residues 368 to 379 (HETKHKFQRLYK) lie on the Cytoplasmic side of the membrane. A helical membrane pass occupies residues 380–400 (FLVPVIIILNLIIAIFFTQVH). Topologically, residues 401-549 (ERGVIDIVQY…KGDIIVYCQI (149 aa)) are lumenal. An N-linked (GlcNAc...) asparagine glycan is attached at Asn442.

Belongs to the glycosyltransferase 22 family. PIGB subfamily.

The protein resides in the endoplasmic reticulum membrane. It participates in glycolipid biosynthesis; glycosylphosphatidylinositol-anchor biosynthesis. Functionally, mannosyltransferase involved in glycosylphosphatidylinositol-anchor biosynthesis. Transfers the third mannose to Man2-GlcN-acyl-PI during GPI precursor assembly. In Debaryomyces hansenii (strain ATCC 36239 / CBS 767 / BCRC 21394 / JCM 1990 / NBRC 0083 / IGC 2968) (Yeast), this protein is GPI mannosyltransferase 3 (GPI10).